The chain runs to 36 residues: MGNLDLEIIAQLTVVTLTLLAGPVIVFLLSVRKGNL.

The helical transmembrane segment at 8 to 28 (IIAQLTVVTLTLLAGPVIVFL) threads the bilayer.

This sequence belongs to the Psb30/Ycf12 family. In terms of assembly, PSII is composed of 1 copy each of membrane proteins PsbA, PsbB, PsbC, PsbD, PsbE, PsbF, PsbH, PsbI, PsbJ, PsbK, PsbL, PsbM, PsbT, PsbX, PsbY, PsbZ, Psb30/Ycf12, peripheral proteins of the oxygen-evolving complex and a large number of cofactors. It forms dimeric complexes.

The protein localises to the plastid. It is found in the cyanelle thylakoid membrane. A core subunit of photosystem II (PSII), probably helps stabilize the reaction center. In Cyanophora paradoxa, this protein is Photosystem II reaction center protein Psb30.